The primary structure comprises 499 residues: Glycolate oxidase subunit GlcD (499 aa).

The region spanning 52 to 230 (YRTRPLLVVL…TEVTVKLLPK (179 aa)) is the FAD-binding PCMH-type domain.

It belongs to the FAD-binding oxidoreductase/transferase type 4 family. As to quaternary structure, the glycolate oxidase likely consists of three subunits, GlcD, GlcE and GlcF. FAD serves as cofactor.

It localises to the cell inner membrane. It catalyses the reaction glycolate + A = glyoxylate + AH2. The catalysed reaction is (R)-lactate + A = pyruvate + AH2. Its function is as follows. Component of a complex that catalyzes the oxidation of glycolate to glyoxylate. Is required for E.coli to grow on glycolate as a sole source of carbon. Is also able to oxidize D-lactate ((R)-lactate) with a similar rate. Does not link directly to O(2), and 2,6-dichloroindophenol (DCIP) and phenazine methosulfate (PMS) can act as artificial electron acceptors in vitro, but the physiological molecule that functions as a primary electron acceptor during glycolate oxidation is unknown. This chain is Glycolate oxidase subunit GlcD (glcD), found in Escherichia coli O6:H1 (strain CFT073 / ATCC 700928 / UPEC).